The primary structure comprises 246 residues: tRNA (guanine-N(1)-)-methyltransferase (246 aa).

G114 serves as a coordination point for S-adenosyl-L-methionine.

Belongs to the RNA methyltransferase TrmD family. As to quaternary structure, homodimer.

It is found in the cytoplasm. The enzyme catalyses guanosine(37) in tRNA + S-adenosyl-L-methionine = N(1)-methylguanosine(37) in tRNA + S-adenosyl-L-homocysteine + H(+). In terms of biological role, specifically methylates guanosine-37 in various tRNAs. The protein is tRNA (guanine-N(1)-)-methyltransferase of Novosphingobium aromaticivorans (strain ATCC 700278 / DSM 12444 / CCUG 56034 / CIP 105152 / NBRC 16084 / F199).